We begin with the raw amino-acid sequence, 297 residues long: Bifunctional protein FolD (297 aa).

Residues 167 to 169 (GRS), Ser-192, and Ile-233 each bind NADP(+).

The protein belongs to the tetrahydrofolate dehydrogenase/cyclohydrolase family. Homodimer.

It catalyses the reaction (6R)-5,10-methylene-5,6,7,8-tetrahydrofolate + NADP(+) = (6R)-5,10-methenyltetrahydrofolate + NADPH. It carries out the reaction (6R)-5,10-methenyltetrahydrofolate + H2O = (6R)-10-formyltetrahydrofolate + H(+). Its pathway is one-carbon metabolism; tetrahydrofolate interconversion. Catalyzes the oxidation of 5,10-methylenetetrahydrofolate to 5,10-methenyltetrahydrofolate and then the hydrolysis of 5,10-methenyltetrahydrofolate to 10-formyltetrahydrofolate. The sequence is that of Bifunctional protein FolD from Caulobacter vibrioides (strain ATCC 19089 / CIP 103742 / CB 15) (Caulobacter crescentus).